The sequence spans 194 residues: Crossover junction endodeoxyribonuclease RuvC (194 aa).

Active-site residues include Asp-8, Glu-72, and Asp-144. Mg(2+) is bound by residues Asp-8, Glu-72, and Asp-144.

This sequence belongs to the RuvC family. As to quaternary structure, homodimer which binds Holliday junction (HJ) DNA. The HJ becomes 2-fold symmetrical on binding to RuvC with unstacked arms; it has a different conformation from HJ DNA in complex with RuvA. In the full resolvosome a probable DNA-RuvA(4)-RuvB(12)-RuvC(2) complex forms which resolves the HJ. It depends on Mg(2+) as a cofactor.

The protein resides in the cytoplasm. The catalysed reaction is Endonucleolytic cleavage at a junction such as a reciprocal single-stranded crossover between two homologous DNA duplexes (Holliday junction).. Functionally, the RuvA-RuvB-RuvC complex processes Holliday junction (HJ) DNA during genetic recombination and DNA repair. Endonuclease that resolves HJ intermediates. Cleaves cruciform DNA by making single-stranded nicks across the HJ at symmetrical positions within the homologous arms, yielding a 5'-phosphate and a 3'-hydroxyl group; requires a central core of homology in the junction. The consensus cleavage sequence is 5'-(A/T)TT(C/G)-3'. Cleavage occurs on the 3'-side of the TT dinucleotide at the point of strand exchange. HJ branch migration catalyzed by RuvA-RuvB allows RuvC to scan DNA until it finds its consensus sequence, where it cleaves and resolves the cruciform DNA. This Psychrobacter arcticus (strain DSM 17307 / VKM B-2377 / 273-4) protein is Crossover junction endodeoxyribonuclease RuvC.